The chain runs to 268 residues: Hydroxyethylthiazole kinase (268 aa).

Substrate is bound at residue Met-45. Residues Arg-121 and Thr-167 each contribute to the ATP site. A substrate-binding site is contributed by Gly-194.

Belongs to the Thz kinase family. Mg(2+) is required as a cofactor.

It carries out the reaction 5-(2-hydroxyethyl)-4-methylthiazole + ATP = 4-methyl-5-(2-phosphooxyethyl)-thiazole + ADP + H(+). It functions in the pathway cofactor biosynthesis; thiamine diphosphate biosynthesis; 4-methyl-5-(2-phosphoethyl)-thiazole from 5-(2-hydroxyethyl)-4-methylthiazole: step 1/1. Its function is as follows. Catalyzes the phosphorylation of the hydroxyl group of 4-methyl-5-beta-hydroxyethylthiazole (THZ). This Bacillus cereus (strain ZK / E33L) protein is Hydroxyethylthiazole kinase.